The primary structure comprises 432 residues: Tol-Pal system protein TolB (432 aa).

A signal peptide spans 1-22 (MMFKKCLSVLFTCLIFISSARA).

Belongs to the TolB family. The Tol-Pal system is composed of five core proteins: the inner membrane proteins TolA, TolQ and TolR, the periplasmic protein TolB and the outer membrane protein Pal. They form a network linking the inner and outer membranes and the peptidoglycan layer.

It is found in the periplasm. Its function is as follows. Part of the Tol-Pal system, which plays a role in outer membrane invagination during cell division and is important for maintaining outer membrane integrity. The sequence is that of Tol-Pal system protein TolB from Marinomonas sp. (strain MWYL1).